A 521-amino-acid polypeptide reads, in one-letter code: Bifunctional purine biosynthesis protein PurH (521 aa).

Residues 1–150 enclose the MGS-like domain; that stretch reads MSEDRKAIKR…KNHPSVAVVT (150 aa).

Belongs to the PurH family.

The catalysed reaction is (6R)-10-formyltetrahydrofolate + 5-amino-1-(5-phospho-beta-D-ribosyl)imidazole-4-carboxamide = 5-formamido-1-(5-phospho-D-ribosyl)imidazole-4-carboxamide + (6S)-5,6,7,8-tetrahydrofolate. It carries out the reaction IMP + H2O = 5-formamido-1-(5-phospho-D-ribosyl)imidazole-4-carboxamide. The protein operates within purine metabolism; IMP biosynthesis via de novo pathway; 5-formamido-1-(5-phospho-D-ribosyl)imidazole-4-carboxamide from 5-amino-1-(5-phospho-D-ribosyl)imidazole-4-carboxamide (10-formyl THF route): step 1/1. Its pathway is purine metabolism; IMP biosynthesis via de novo pathway; IMP from 5-formamido-1-(5-phospho-D-ribosyl)imidazole-4-carboxamide: step 1/1. In Corynebacterium efficiens (strain DSM 44549 / YS-314 / AJ 12310 / JCM 11189 / NBRC 100395), this protein is Bifunctional purine biosynthesis protein PurH.